The primary structure comprises 80 residues: UPF0181 protein SG1330 (80 aa).

The segment at 58-80 (TEVLETPAARAETDPYDSNPDDD) is disordered.

It belongs to the UPF0181 family.

This Sodalis glossinidius (strain morsitans) protein is UPF0181 protein SG1330.